The following is a 349-amino-acid chain: KH domain-containing, RNA-binding, signal transduction-associated protein 2 (349 aa).

The 71-residue stretch at Leu-65–Ile-135 folds into the KH domain. 2 disordered regions span residues Glu-182–Thr-284 and Pro-319–Tyr-349. Omega-N-methylarginine is present on residues Arg-230 and Arg-240. The segment covering Gly-340 to Tyr-349 has biased composition (basic and acidic residues).

The protein belongs to the KHDRBS family. In terms of assembly, self-associates to form homooligomers. Interacts with KHDRBS1/SAM68; heterooligomer formation of KHDRBS family proteins may modulate RNA substrate specificity. Interacts with RBMX. Interacts with SAFB, SFRS9 and YTHDC1. Interacts with FYN and PLCG1 (via SH3 domain). Interacts (phosphorylated) with FYN, GRB2, PLCG1 and RASA1 (via SH2 domain). In terms of processing, methylated. Post-translationally, tyrosine phosphorylated by FYN, PTK6 and SRC. Tyrosine phosphorylated by SRC during mitosis. As to expression, highly expressed in brain, lung, kidney and small intestine. Weakly expressed in placenta, liver, spleen, thymus, ovary and colon.

The protein resides in the nucleus. Its function is as follows. RNA-binding protein that plays a role in the regulation of alternative splicing and influences mRNA splice site selection and exon inclusion. Binds both poly(A) and poly(U) homopolymers. Phosphorylation by PTK6 inhibits its RNA-binding ability. Induces an increased concentration-dependent incorporation of exon in CD44 pre-mRNA by direct binding to purine-rich exonic enhancer. Can regulate alternative splicing of NRXN1 in the laminin G-like domain 6 containing the evolutionary conserved neurexin alternative spliced segment 4 (AS4) involved in neurexin selective targeting to postsynaptic partners. Regulates cell-type specific alternative splicing of NRXN1 at AS4 and acts synergystically with SAM68 in exon skipping. In contrast acts antagonistically with SAM68 in NRXN3 exon skipping at AS4. Its phosphorylation by FYN inhibits its ability to regulate splice site selection. May function as an adapter protein for Src kinases during mitosis. The polypeptide is KH domain-containing, RNA-binding, signal transduction-associated protein 2 (KHDRBS2) (Homo sapiens (Human)).